The sequence spans 119 residues: uncharacterized protein (119 aa).

This sequence to Synechocystis PCC 6803 slr0903.

This is an uncharacterized protein from Methanocaldococcus jannaschii (strain ATCC 43067 / DSM 2661 / JAL-1 / JCM 10045 / NBRC 100440) (Methanococcus jannaschii).